The primary structure comprises 375 residues: MKAGATSMWASCCGLLNEVMGTGAVRGQQSGFAGGTGPFRFTPNSDFSAYPPASAEGPNIVCKACGLSFSVFRKKHVCCDCKKDFCSVCSVLQENLRRCSTCHLLQETAFQRPQLMRLKVKDLRQYLILRNIPIDTCREKEDLVDLVLCHHRLGSEDDLDTSSLNSSRSQTSSFFTHSFFSNYTAPSATASSFQGELMGGDRTLGSGALAQEPSEIASANTEDDEDDDDDDDDDDDDDEENLEDRTPGLTKKRVRASLSDLSSLEDVEGMSVRQLKEILARNFVNYSGCCEKWELVEKVNRLYKENEENQKSYGERLQLQDEEDDSLCRICMDAVIDCVLLECGHMVTCTKCGKRMSECPICRQYVVRAVHVFKS.

The FYVE-type zinc finger occupies 56 to 107 (EGPNIVCKACGLSFSVFRKKHVCCDCKKDFCSVCSVLQENLRRCSTCHLLQE). The region spanning 115-134 (LMRLKVKDLRQYLILRNIPI) is the SAP 1 domain. The residue at position 169 (S169) is a Phosphoserine. The interval 202–250 (RTLGSGALAQEPSEIASANTEDDEDDDDDDDDDDDDDEENLEDRTPGLT) is disordered. Positions 221 to 242 (TEDDEDDDDDDDDDDDDDEENL) are enriched in acidic residues. Residues S257 and S259 each carry the phosphoserine modification. The SAP 2 domain maps to 267–281 (VEGMSVRQLKEILAR). The segment at 328 to 363 (CRICMDAVIDCVLLECGHMVTCTKCGKRMSECPICR) adopts an RING-type zinc-finger fold.

As to quaternary structure, interacts with CASP8 and CASP10. Interacts with p53/TP53; involved in p53/TP53 ubiquitination. Interacts (via RING-type zinc finger) with MDM2; the interaction stabilizes MDM2. Interacts (via RING-type zinc finger) with PPARGC1A. Interacts with NOD1. In terms of processing, autoubiquitinated (in vitro). Post-translationally, proteolytically cleaved by caspases upon induction of apoptosis by TNF.

It is found in the cell membrane. It localises to the endomembrane system. The protein localises to the nucleus. Its subcellular location is the nucleus speckle. The protein resides in the cytoplasm. It is found in the cytosol. The enzyme catalyses S-ubiquitinyl-[E2 ubiquitin-conjugating enzyme]-L-cysteine + [acceptor protein]-L-lysine = [E2 ubiquitin-conjugating enzyme]-L-cysteine + N(6)-ubiquitinyl-[acceptor protein]-L-lysine.. The protein operates within protein modification; protein ubiquitination. Functionally, E3 ubiquitin-protein ligase that regulates several biological processes through the ubiquitin-mediated proteasomal degradation of various target proteins. Ubiquitinates the caspases CASP8 and CASP10, promoting their proteasomal degradation, to negatively regulate cell death downstream of death domain receptors in the extrinsic pathway of apoptosis. May mediate 'Lys-48'-linked polyubiquitination of RIPK1 and its subsequent proteasomal degradation thereby indirectly regulating the tumor necrosis factor-mediated signaling pathway. Negatively regulates p53/TP53 through its direct ubiquitination and targeting to proteasomal degradation. Indirectly, may also negatively regulate p53/TP53 through ubiquitination and degradation of SFN. Mediates PPARGC1A proteasomal degradation probably through ubiquitination thereby indirectly regulating the metabolism of brown fat cells. Possibly involved in innate immunity, through 'Lys-48'-linked polyubiquitination of NOD1 and its subsequent proteasomal degradation. The sequence is that of E3 ubiquitin-protein ligase RNF34 (RNF34) from Bos taurus (Bovine).